An 827-amino-acid polypeptide reads, in one-letter code: Lon protease (827 aa).

Residues 38-233 (LTLLASKYNV…VLLKYLLKDL (196 aa)) form the Lon N-terminal domain. ATP is bound at residue 384-391 (GPPGVGKT). The Lon proteolytic domain occupies 619-800 (THLPGVAIGL…EEVIQLALQP (182 aa)). Active-site residues include Ser-706 and Lys-749.

It belongs to the peptidase S16 family. In terms of assembly, homohexamer. Organized in a ring with a central cavity.

The protein localises to the cytoplasm. It carries out the reaction Hydrolysis of proteins in presence of ATP.. ATP-dependent serine protease that mediates the selective degradation of mutant and abnormal proteins as well as certain short-lived regulatory proteins. Required for cellular homeostasis and for survival from DNA damage and developmental changes induced by stress. Degrades polypeptides processively to yield small peptide fragments that are 5 to 10 amino acids long. Binds to DNA in a double-stranded, site-specific manner. This is Lon protease from Amoebophilus asiaticus (strain 5a2).